Here is a 975-residue protein sequence, read N- to C-terminus: Translation initiation factor IF-2 (975 aa).

2 disordered regions span residues 49–110 and 193–339; these read KLSG…APKA and AAAP…GRGA. Residues 63-72 are compositionally biased toward basic residues; that stretch reads KKTAARKAAP. Low complexity-rich tracts occupy residues 73–94, 193–202, and 209–225; these read KKAA…AKTP, AAAPEAPAPQ, and VVGT…ASAP. Residues 308–318 are compositionally biased toward basic and acidic residues; that stretch reads GADRGGRDFDK. Over residues 324–336 the composition is skewed to low complexity; that stretch reads GPSAPAAGPAAAG. One can recognise a tr-type G domain in the interval 469 to 639; it reads TRPPVVTVMG…KLVAEVAELK (171 aa). Residues 478-485 form a G1 region; that stretch reads GHVDHGKT. Position 478 to 485 (478 to 485) interacts with GTP; the sequence is GHVDHGKT. The segment at 503–507 is G2; it reads GITQH. A G3 region spans residues 525-528; that stretch reads DTPG. Residues 525–529 and 579–582 each bind GTP; these read DTPGH and NKID. The interval 579 to 582 is G4; the sequence is NKID. The segment at 615–617 is G5; it reads SAL.

The protein belongs to the TRAFAC class translation factor GTPase superfamily. Classic translation factor GTPase family. IF-2 subfamily.

The protein resides in the cytoplasm. One of the essential components for the initiation of protein synthesis. Protects formylmethionyl-tRNA from spontaneous hydrolysis and promotes its binding to the 30S ribosomal subunits. Also involved in the hydrolysis of GTP during the formation of the 70S ribosomal complex. This chain is Translation initiation factor IF-2, found in Bdellovibrio bacteriovorus (strain ATCC 15356 / DSM 50701 / NCIMB 9529 / HD100).